The sequence spans 179 residues: Inorganic pyrophosphatase (179 aa).

Substrate is bound by residues Lys-30, Arg-44, and Tyr-56. 3 residues coordinate Mg(2+): Asp-66, Asp-71, and Asp-103. Tyr-143 contacts substrate.

Belongs to the PPase family. Homohexamer. The cofactor is Mg(2+).

It is found in the cytoplasm. It catalyses the reaction diphosphate + H2O = 2 phosphate + H(+). In terms of biological role, catalyzes the hydrolysis of inorganic pyrophosphate (PPi) forming two phosphate ions. The protein is Inorganic pyrophosphatase of Wigglesworthia glossinidia brevipalpis.